The sequence spans 553 residues: Dihydroxy-acid dehydratase (553 aa).

Position 78 (D78) interacts with Mg(2+). C119 serves as a coordination point for [2Fe-2S] cluster. 2 residues coordinate Mg(2+): D120 and K121. K121 carries the post-translational modification N6-carboxylysine. [2Fe-2S] cluster is bound at residue C193. E441 is a Mg(2+) binding site. S467 serves as the catalytic Proton acceptor.

The protein belongs to the IlvD/Edd family. As to quaternary structure, homodimer. It depends on [2Fe-2S] cluster as a cofactor. The cofactor is Mg(2+).

It carries out the reaction (2R)-2,3-dihydroxy-3-methylbutanoate = 3-methyl-2-oxobutanoate + H2O. The catalysed reaction is (2R,3R)-2,3-dihydroxy-3-methylpentanoate = (S)-3-methyl-2-oxopentanoate + H2O. It participates in amino-acid biosynthesis; L-isoleucine biosynthesis; L-isoleucine from 2-oxobutanoate: step 3/4. The protein operates within amino-acid biosynthesis; L-valine biosynthesis; L-valine from pyruvate: step 3/4. In terms of biological role, functions in the biosynthesis of branched-chain amino acids. Catalyzes the dehydration of (2R,3R)-2,3-dihydroxy-3-methylpentanoate (2,3-dihydroxy-3-methylvalerate) into 2-oxo-3-methylpentanoate (2-oxo-3-methylvalerate) and of (2R)-2,3-dihydroxy-3-methylbutanoate (2,3-dihydroxyisovalerate) into 2-oxo-3-methylbutanoate (2-oxoisovalerate), the penultimate precursor to L-isoleucine and L-valine, respectively. In Geotalea daltonii (strain DSM 22248 / JCM 15807 / FRC-32) (Geobacter daltonii), this protein is Dihydroxy-acid dehydratase.